A 587-amino-acid chain; its full sequence is Lipoprotein LpqB (587 aa).

A signal peptide spans 1-19; the sequence is MERLMRLTILLFLGAVLAG. The N-palmitoyl cysteine moiety is linked to residue Cys20. Cys20 carries the S-diacylglycerol cysteine lipid modification.

The protein belongs to the LpqB lipoprotein family. In terms of assembly, interacts with MtrB, probably extracytoplasmically.

The protein localises to the cell membrane. It localises to the secreted. Its subcellular location is the cell wall. In terms of biological role, may modulate activity of the MtrAB system in controlling homeostasis of the cell wall and cell division. This Mycobacterium tuberculosis (strain CDC 1551 / Oshkosh) protein is Lipoprotein LpqB.